The following is a 639-amino-acid chain: Protein sly1 homolog (639 aa).

4 repeat units span residues 85-121 (DENL…NLAA), 203-245 (RNSA…FSFQ), 423-460 (LDLL…ERLK), and 464-500 (QAAG…GGGT). The segment at 85–500 (DENLDRIQQD…QATQYEGGGT (416 aa)) is 4 X approximate repeats.

This sequence belongs to the STXBP/unc-18/SEC1 family. In terms of tissue distribution, in embryos, from stage 14, expression is seen in posterior midgut, esophagus and salivary glands. No expression is seen in larval imaginal disks.

The protein resides in the cytoplasm. The protein localises to the membrane. Its function is as follows. Non-vital for development. The polypeptide is Protein sly1 homolog (Slh) (Drosophila melanogaster (Fruit fly)).